A 198-amino-acid polypeptide reads, in one-letter code: Recombination protein RecR (198 aa).

Residues cysteine 57–cysteine 72 form a C4-type zinc finger. The Toprim domain maps to serine 80–proline 175.

Belongs to the RecR family.

In terms of biological role, may play a role in DNA repair. It seems to be involved in an RecBC-independent recombinational process of DNA repair. It may act with RecF and RecO. In Listeria monocytogenes serotype 4b (strain CLIP80459), this protein is Recombination protein RecR.